A 124-amino-acid chain; its full sequence is Large ribosomal subunit protein uL29 (124 aa).

Belongs to the universal ribosomal protein uL29 family.

This is Large ribosomal subunit protein uL29 (RPL35) from Triticum aestivum (Wheat).